A 319-amino-acid chain; its full sequence is Cutinase cut1 (319 aa).

The signal sequence occupies residues 1–58; that stretch reads MPPHAARPGPAQNRRGRAMAVITPRRERSSLLSRALRFTAAAATALVTAVSLAAPAHA. Tyr-118 is a binding site for poly(ethylene terephthalate). Ser-188 serves as the catalytic Nucleophile. Poly(ethylene terephthalate)-binding residues include Met-189 and Trp-213. Catalysis depends on charge relay system residues Asp-234 and His-266. Cys-299 and Cys-317 are joined by a disulfide.

It belongs to the AB hydrolase superfamily.

The protein resides in the secreted. Its subcellular location is the periplasm. It catalyses the reaction an acetyl ester + H2O = an aliphatic alcohol + acetate + H(+). It carries out the reaction a butanoate ester + H2O = an aliphatic alcohol + butanoate + H(+). The enzyme catalyses pentanoate ester + H2O = pentanoate + an aliphatic alcohol + H(+). The catalysed reaction is an octanoate ester + H2O = an aliphatic alcohol + octanoate + H(+). It catalyses the reaction decanoate ester + H2O = decanoate + an aliphatic alcohol + H(+). It carries out the reaction a dodecanoate ester + H2O = an aliphatic alcohol + dodecanoate + H(+). The enzyme catalyses a tetradecanoate ester + H2O = an aliphatic alcohol + tetradecanoate + H(+). The catalysed reaction is hexadecanoate ester + H2O = an aliphatic alcohol + hexadecanoate + H(+). It catalyses the reaction cutin + H2O = cutin monomers.. It carries out the reaction (ethylene terephthalate)(n) + H2O = (ethylene terephthalate)(n-1) + 4-[(2-hydroxyethoxy)carbonyl]benzoate + H(+). With respect to regulation, activated by magnesium ions. Activated by calcium ions. Its function is as follows. Catalyzes the hydrolysis of cutin, a polyester that forms the structure of plant cuticle. Shows esterase activity towards p-nitrophenol-linked aliphatic esters (pNP-aliphatic esters). Capable of degrading the plastic poly(ethylene terephthalate) (PET), the most abundant polyester plastic in the world. The protein is Cutinase cut1 of Thermobifida fusca (Thermomonospora fusca).